The sequence spans 433 residues: Ectonucleoside triphosphate diphosphohydrolase 5 (433 aa).

The first 24 residues, 1-24 (MATTWGAAFFMLVASCVCSTVFHR), serve as a signal peptide directing secretion. Residue E172 is the Proton acceptor of the active site. A glycan (N-linked (GlcNAc...) asparagine) is linked at N232. Cystine bridges form between C272–C308 and C368–C382.

This sequence belongs to the GDA1/CD39 NTPase family. As to quaternary structure, monomer; active form. Homodimer; disulfide-linked. Homodimers are enzymatically inactive. Requires Ca(2+) as cofactor. Mg(2+) serves as cofactor. Post-translationally, N-glycosylated; high-mannose type.

The protein localises to the endoplasmic reticulum. It is found in the secreted. The enzyme catalyses a ribonucleoside 5'-diphosphate + H2O = a ribonucleoside 5'-phosphate + phosphate + H(+). It catalyses the reaction GDP + H2O = GMP + phosphate + H(+). It carries out the reaction UDP + H2O = UMP + phosphate + H(+). The catalysed reaction is IDP + H2O = IMP + phosphate + H(+). The enzyme catalyses CDP + H2O = CMP + phosphate + H(+). It catalyses the reaction ADP + H2O = AMP + phosphate + H(+). It functions in the pathway protein modification; protein glycosylation. In terms of biological role, hydrolyzes nucleoside diphosphates with a preference for GDP, IDP and UDP compared to ADP and CDP. In the lumen of the endoplasmic reticulum, hydrolyzes UDP that acts as an end-product feedback inhibitor of the UDP-Glc:glycoprotein glucosyltransferases. UMP can be transported back by an UDP-sugar antiporter to the cytosol where it is consumed to regenerate UDP-glucose. Therefore, it positively regulates protein reglucosylation by clearing UDP from the ER lumen and by promoting the regeneration of UDP-glucose. Protein reglucosylation is essential to proper glycoprotein folding and quality control in the ER. The protein is Ectonucleoside triphosphate diphosphohydrolase 5 (ENTPD5) of Ailuropoda melanoleuca (Giant panda).